Consider the following 231-residue polypeptide: MAGKKVLIVYAHQEPKSFNGSLKNVAVDELSRQGCTVTVSDLYAMNLEPRATDKDITGTLSNPEVFNYGVETHEAYKQRSLASDITDEQKKVREADLVIFQFPLYWFSVPAILKGWMDRVLCQGFAFDIPGFYDSGLLQGKLALLSVTTGGTAEMYTKTGVNGDSRYFLWPLQHGTLHFCGFKVLAPQISFAPEIASEEERKGMVAAWSQRLQTIWKEEPIPCTAHWHFGQ.

Residues His-12 and Phe-18–Ser-21 contribute to the FAD site. Position 80 is a phosphoserine (Ser-80). FAD is bound at residue Leu-104–Phe-107. Phe-127–Ile-129 contacts substrate. Residues Thr-148 to Gly-151 and Tyr-156 contribute to the FAD site. His-174 and His-178 together coordinate Zn(2+). Glu-194 is an FAD binding site. Phosphoserine is present on Ser-197. An FAD-binding site is contributed by Arg-201. Cys-223 contributes to the Zn(2+) binding site.

Belongs to the NAD(P)H dehydrogenase (quinone) family. As to quaternary structure, homodimer. Zn(2+) is required as a cofactor. Requires FAD as cofactor.

Its subcellular location is the cytoplasm. It carries out the reaction 1-(beta-D-ribofuranosyl)-1,4-dihydronicotinamide + a quinone + H(+) = beta-nicotinamide D-riboside + a quinol. With respect to regulation, inhibited by melatonin, resveratrol and 5-hydroxytryptamine. Functionally, the enzyme apparently serves as a quinone reductase in connection with conjugation reactions of hydroquinones involved in detoxification pathways as well as in biosynthetic processes such as the vitamin K-dependent gamma-carboxylation of glutamate residues in prothrombin synthesis. The chain is Ribosyldihydronicotinamide dehydrogenase [quinone] (NQO2) from Homo sapiens (Human).